Here is a 291-residue protein sequence, read N- to C-terminus: Phosphatidylglycerol--prolipoprotein diacylglyceryl transferase (291 aa).

Transmembrane regions (helical) follow at residues 21 to 41 (VALH…MWLA), 60 to 80 (LLYA…VLFY), 96 to 116 (WDGG…MIIF), 130 to 150 (FIAP…FING), 198 to 218 (SQLY…NLFI), 225 to 245 (GAVS…VEFF), and 260 to 280 (ISMG…MMVW). Residue R143 participates in a 1,2-diacyl-sn-glycero-3-phospho-(1'-sn-glycerol) binding.

The protein belongs to the Lgt family.

The protein resides in the cell inner membrane. It carries out the reaction L-cysteinyl-[prolipoprotein] + a 1,2-diacyl-sn-glycero-3-phospho-(1'-sn-glycerol) = an S-1,2-diacyl-sn-glyceryl-L-cysteinyl-[prolipoprotein] + sn-glycerol 1-phosphate + H(+). It functions in the pathway protein modification; lipoprotein biosynthesis (diacylglyceryl transfer). In terms of biological role, catalyzes the transfer of the diacylglyceryl group from phosphatidylglycerol to the sulfhydryl group of the N-terminal cysteine of a prolipoprotein, the first step in the formation of mature lipoproteins. The chain is Phosphatidylglycerol--prolipoprotein diacylglyceryl transferase from Salmonella newport (strain SL254).